The primary structure comprises 304 residues: ADP-ribosyl cyclase/cyclic ADP-ribose hydrolase 1 (304 aa).

Topologically, residues 1 to 21 (MANYEFSQVSGDRPGCRLSRK) are cytoplasmic. A helical; Signal-anchor for type II membrane protein membrane pass occupies residues 22 to 44 (AQIGLGVGLLVLIALVVGIVVIL). The Extracellular segment spans residues 45-304 (LRPRSLLVWT…PEHPSCRLNT (260 aa)). 3 cysteine pairs are disulfide-bonded: Cys-70-Cys-86, Cys-103-Cys-184, and Cys-164-Cys-177. Asn-104 is a glycosylation site (N-linked (GlcNAc...) asparagine). Cys-123 is an active-site residue. An N-linked (GlcNAc...) asparagine glycan is attached at Asn-124. Residue Cys-205 is part of the active site. N-linked (GlcNAc...) asparagine glycosylation is found at Asn-213 and Asn-223. 2 disulfides stabilise this stretch: Cys-258–Cys-279 and Cys-291–Cys-300.

The protein belongs to the ADP-ribosyl cyclase family. As to quaternary structure, homodimer.

It is found in the membrane. The catalysed reaction is NAD(+) = cyclic ADP-beta-D-ribose + nicotinamide + H(+). It carries out the reaction nicotinate + NADP(+) = nicotinate-adenine dinucleotide phosphate + nicotinamide. It catalyses the reaction NAD(+) + H2O = ADP-D-ribose + nicotinamide + H(+). Functionally, synthesizes the second messengers cyclic ADP-ribose (cADPR) and nicotinate-adenine dinucleotide phosphate (NAADP), the former a second messenger for glucose-induced insulin secretion, the latter a Ca(2+) mobilizer. Also has cADPR hydrolase activity. The sequence is that of ADP-ribosyl cyclase/cyclic ADP-ribose hydrolase 1 (Cd38) from Mus musculus (Mouse).